A 204-amino-acid polypeptide reads, in one-letter code: CASP-like protein 1B2 (204 aa).

Over 1 to 28 the chain is Cytoplasmic; it reads MASKGEEKPELVGSKQGIVSVTKAKHDQ. Residues 29–49 traverse the membrane as a helical segment; sequence IVLVLRVVAFLATASATIVMG. Residues 50 to 80 are Extracellular-facing; sequence LNQETKTLLVGTIGTTPIRATLKAKFQHTPA. A helical membrane pass occupies residues 81–101; the sequence is FVFFVVANGLASVYNLVMLGV. At 102–114 the chain is on the cytoplasmic side; sequence DVFGRKLDCKGLR. Residues 115-135 form a helical membrane-spanning segment; sequence LVIISILDMVIVAVVAAGASS. Residues 136–168 lie on the Extracellular side of the membrane; that stretch reads AAFMAELGKNGNSHAKWNKICDKFESFCHQGGG. Residues 169–189 traverse the membrane as a helical segment; the sequence is ALIPSFIALLLLFLISAISII. Topologically, residues 190–204 are cytoplasmic; it reads TLHNQKLTSPHATTP.

Belongs to the Casparian strip membrane proteins (CASP) family. Homodimer and heterodimers.

Its subcellular location is the cell membrane. In Vitis vinifera (Grape), this protein is CASP-like protein 1B2.